The sequence spans 169 residues: Ribosome maturation factor RimM (169 aa).

A PRC barrel domain is found at 97 to 169; it reads PGEYYWYQLI…VITVDWDMNF (73 aa).

Belongs to the RimM family. Binds ribosomal protein uS19.

The protein localises to the cytoplasm. In terms of biological role, an accessory protein needed during the final step in the assembly of 30S ribosomal subunit, possibly for assembly of the head region. Essential for efficient processing of 16S rRNA. May be needed both before and after RbfA during the maturation of 16S rRNA. It has affinity for free ribosomal 30S subunits but not for 70S ribosomes. This is Ribosome maturation factor RimM from Legionella pneumophila (strain Paris).